Consider the following 187-residue polypeptide: Probable chorismate pyruvate-lyase (187 aa).

Substrate contacts are provided by arginine 80, leucine 118, and glutamate 170.

This sequence belongs to the UbiC family.

It localises to the cytoplasm. It carries out the reaction chorismate = 4-hydroxybenzoate + pyruvate. It participates in cofactor biosynthesis; ubiquinone biosynthesis. Its function is as follows. Removes the pyruvyl group from chorismate, with concomitant aromatization of the ring, to provide 4-hydroxybenzoate (4HB) for the ubiquinone pathway. The sequence is that of Probable chorismate pyruvate-lyase from Pseudomonas fluorescens (strain ATCC BAA-477 / NRRL B-23932 / Pf-5).